A 550-amino-acid polypeptide reads, in one-letter code: MTPADLADLLRTTATAVLTERDLDTAALPATVTVERPRNPEHGDYATNLALQVGKKVGVNPRELAGWLAEALTATAGIASAEVAGPGFVNLRIEAAAQNVIVGDIITSAERYGHSAALAERNINLEFVSANPTGPIHIGGTRWAAVGDALGRLLATQGAAVVREYYFNDHGAQIDRFVSSLIAAAKGEPTPEDGYAGSYIGDIAAQVLAKDPGALELPDDEMRETFRAIGVDLMFDHIKISLHDFGTDFDVFTHEDSMHTSGRVEEAIARLRENGAIYEKDGATWLRTTDFGDDKDRVVIKSDGAPAYIAGDLAYFLDKRQRGFDLCIYMLGADHHGYIARLKAAAAALGDDPDTVEVMIGQMVNLVRDGQPVRMSKRAGTVITLDDLVEAIGVDAARYSLIRSSVDTPIDIDLALWSSASNENPVYYVQYAHARLSALARNAADLGVVADTAHLDLLTHDKEGTLIRNLGEFPRVLESAAALREPHRVCRYLEDLAGDYHRFYDSCRVLPQGDEAPGSLHQARLALCQATRQVIANGLAILGVSAPERM.

Residues Ala130–Gly140 carry the 'HIGH' region motif.

This sequence belongs to the class-I aminoacyl-tRNA synthetase family. In terms of assembly, monomer.

It localises to the cytoplasm. It carries out the reaction tRNA(Arg) + L-arginine + ATP = L-arginyl-tRNA(Arg) + AMP + diphosphate. The sequence is that of Arginine--tRNA ligase from Mycobacterium sp. (strain KMS).